The primary structure comprises 568 residues: Putative DEAD-box RNA helicase HEL64 (568 aa).

The interval 1–34 (MEETYSPFTGRQGQYNQGYNGGGRRDSRGGMGER) is disordered. Basic and acidic residues predominate over residues 23–34 (GRRDSRGGMGER). The Q motif motif lies at 102–130 (FDHLCGIVPPYLLKKLTAQNFTAPTPVQA). One can recognise a Helicase ATP-binding domain in the interval 133–307 (WPVLLSGRDL…AEFQKQWIRI (175 aa)). ATP is bound at residue 146–153 (AKTGSGKT). Positions 255–258 (DEAD) match the DEAD box motif. In terms of domain architecture, Helicase C-terminal spans 335-483 (ELRKLMQEHR…EIPDWMIEWN (149 aa)).

Belongs to the DEAD box helicase family. DDX5/DBP2 subfamily.

It is found in the nucleus. The enzyme catalyses ATP + H2O = ADP + phosphate + H(+). This Trypanosoma brucei brucei protein is Putative DEAD-box RNA helicase HEL64 (HEL64).